The primary structure comprises 311 residues: Malate dehydrogenase (311 aa).

NAD(+)-binding positions include 7–13 (GAAGGIG) and Asp-34. 2 residues coordinate substrate: Arg-81 and Arg-87. NAD(+) contacts are provided by residues Asn-94 and 117–119 (ITN). Substrate contacts are provided by Asn-119 and Arg-153. The Proton acceptor role is filled by His-177. Met-227 contacts NAD(+).

The protein belongs to the LDH/MDH superfamily. MDH type 1 family. In terms of assembly, homodimer.

The enzyme catalyses (S)-malate + NAD(+) = oxaloacetate + NADH + H(+). Catalyzes the reversible oxidation of malate to oxaloacetate. The polypeptide is Malate dehydrogenase (Aliivibrio fischeri (strain MJ11) (Vibrio fischeri)).